The chain runs to 65 residues: Large ribosomal subunit protein bL35 (65 aa).

The protein belongs to the bacterial ribosomal protein bL35 family.

The chain is Large ribosomal subunit protein bL35 from Methylobacillus flagellatus (strain ATCC 51484 / DSM 6875 / VKM B-1610 / KT).